Here is a 101-residue protein sequence, read N- to C-terminus: Interleukin-8 (101 aa).

The first 22 residues, methionine 1–glycine 22, serve as a signal peptide directing secretion. The residue at position 27 (arginine 27) is a Citrulline. Disulfide bonds link cysteine 34–cysteine 61 and cysteine 36–cysteine 77.

The protein belongs to the intercrine alpha (chemokine CxC) family. As to quaternary structure, homodimer. Interacts with TNFAIP6 (via Link domain); this interaction interferes with chemokine binding to glycosaminoglycans. Citrullination at Arg-27 prevents proteolysis, and dampens tissue inflammation, it also enhances leukocytosis, possibly through impaired chemokine clearance from the blood circulation.

It localises to the secreted. Functionally, chemotactic factor that mediates inflammatory response by attracting neutrophils, basophils, and T-cells to clear pathogens and protect the host from infection. Also plays an important role in neutrophil activation. Released in response to an inflammatory stimulus, exerts its effect by binding to the G-protein-coupled receptors CXCR1 and CXCR2, primarily found in neutrophils, monocytes and endothelial cells. G-protein heterotrimer (alpha, beta, gamma subunits) constitutively binds to CXCR1/CXCR2 receptor and activation by IL8 leads to beta and gamma subunits release from Galpha (GNAI2 in neutrophils) and activation of several downstream signaling pathways including PI3K and MAPK pathways. This chain is Interleukin-8 (CXCL8), found in Cercocebus atys (Sooty mangabey).